Reading from the N-terminus, the 176-residue chain is Translation initiation factor IF-3 (176 aa).

This sequence belongs to the IF-3 family. Monomer.

It localises to the cytoplasm. Its function is as follows. IF-3 binds to the 30S ribosomal subunit and shifts the equilibrium between 70S ribosomes and their 50S and 30S subunits in favor of the free subunits, thus enhancing the availability of 30S subunits on which protein synthesis initiation begins. This is Translation initiation factor IF-3 from Streptococcus uberis (strain ATCC BAA-854 / 0140J).